The sequence spans 177 residues: Ribosome maturation factor RimM (177 aa).

A PRC barrel domain is found at Asp-104 to Leu-176.

This sequence belongs to the RimM family. In terms of assembly, binds ribosomal protein uS19.

Its subcellular location is the cytoplasm. In terms of biological role, an accessory protein needed during the final step in the assembly of 30S ribosomal subunit, possibly for assembly of the head region. Essential for efficient processing of 16S rRNA. May be needed both before and after RbfA during the maturation of 16S rRNA. It has affinity for free ribosomal 30S subunits but not for 70S ribosomes. The protein is Ribosome maturation factor RimM of Fervidobacterium nodosum (strain ATCC 35602 / DSM 5306 / Rt17-B1).